Consider the following 147-residue polypeptide: Small ribosomal subunit protein eS10B (147 aa).

The tract at residues 90-147 is disordered; the sequence is THKRQVRPAAPRAGRPEPRERSSAADAGYRRAEKKDDGAAPGGFAPSFRGGFGRPVAA. Basic and acidic residues predominate over residues 103-127; the sequence is GRPEPRERSSAADAGYRRAEKKDDG.

It belongs to the eukaryotic ribosomal protein eS10 family. Component of the small ribosomal subunit (SSU). Mature yeast ribosomes consist of a small (40S) and a large (60S) subunit. The 40S small subunit contains 1 molecule of ribosomal RNA (18S rRNA) and at least 33 different proteins. The large 60S subunit contains 3 rRNA molecules (25S, 5.8S and 5S rRNA) and at least 46 different proteins. eS10 interacts with GCN1 (via middle region); this interaction is direct and promotes GCN2 kinase activity.

It localises to the cytoplasm. Its function is as follows. Component of the ribosome, a large ribonucleoprotein complex responsible for the synthesis of proteins in the cell. The small ribosomal subunit (SSU) binds messenger RNAs (mRNAs) and translates the encoded message by selecting cognate aminoacyl-transfer RNA (tRNA) molecules. The large subunit (LSU) contains the ribosomal catalytic site termed the peptidyl transferase center (PTC), which catalyzes the formation of peptide bonds, thereby polymerizing the amino acids delivered by tRNAs into a polypeptide chain. The nascent polypeptides leave the ribosome through a tunnel in the LSU and interact with protein factors that function in enzymatic processing, targeting, and the membrane insertion of nascent chains at the exit of the ribosomal tunnel. eS10 plays a role as a positive regulator of the GCN2 kinase activity by stimulating GCN1-mediated GCN2 activation. This is Small ribosomal subunit protein eS10B (rps1002) from Schizosaccharomyces pombe (strain 972 / ATCC 24843) (Fission yeast).